The primary structure comprises 358 residues: Cilia- and flagella-associated protein 263 (358 aa).

3 coiled-coil regions span residues 93–138, 176–200, and 266–343; these read YKKM…FKRN, RKNSALLTHKKKQQAQLRQQEEMAE, and RTKL…YTKS.

It belongs to the CFAP263 family. As to quaternary structure, forms a complex with CFAP184; the interaction is required for functional activity in cilia. Interacts with HAP1 and PCM1.

It is found in the cytoplasm. Its subcellular location is the cytoskeleton. It localises to the microtubule organizing center. The protein resides in the centrosome. The protein localises to the centriolar satellite. It is found in the cell projection. Its subcellular location is the cilium. Its function is as follows. Component of centriolar satellites contributing to primary cilium formation. In complex with CFAP263, acts as a regulator of ciliary beating that connects radial spoke 3 (RS3) to the inner dynein arm (IDA) and the nexin-dynein regulatory complex (N-DRC). The complex is positioned parallel to N-DRC and forms a connection between the arch at the base of RS3, the IDA tail and N-DRC. This is Cilia- and flagella-associated protein 263 (cfap263) from Danio rerio (Zebrafish).